Here is an 83-residue protein sequence, read N- to C-terminus: MKIVFAILFLTFIALTYARSFEDLKEEIKNEIEKEIFDDLEEESDELDNNVKKFNDAKPWRRWFRWKNIAPLIPVVIAASGKK.

The first 18 residues, 1–18 (MKIVFAILFLTFIALTYA), serve as a signal peptide directing secretion. Residues 19 to 57 (RSFEDLKEEIKNEIEKEIFDDLEEESDELDNNVKKFNDA) constitute a propeptide that is removed on maturation. Serine 80 is subject to Serine amide.

This sequence belongs to the arminin family. Expressed in entodermal epithelium along the body column.

It is found in the secreted. Its subcellular location is the target cell membrane. Functionally, antimicrobial peptide with a broad-spectrum antimicrobial activity. Keeps its antibacterial activity under a wide range of salt concentrations that mimic physiological conditions of human blood, which is surprising, since Hydra is an obligate freshwater animal with nearly no salt tolerance. Does not affect red blood cells. This chain is Arminin 3b, found in Hydra vulgaris (Hydra).